A 484-amino-acid polypeptide reads, in one-letter code: Monocarboxylate transporter 2 (484 aa).

At 1–16 the chain is on the cytoplasmic side; that stretch reads MPSEPSAPLPQPLPPD. A helical transmembrane segment spans residues 17–37; that stretch reads GGWGWVVVCASFISIGFSYAF. Topologically, residues 38 to 60 are extracellular; the sequence is PKAVTVFFKDIQEIFNTTSSQIA. A helical membrane pass occupies residues 61–81; it reads WISSIMLAVMYAGGPISSVLV. The Cytoplasmic portion of the chain corresponds to 82–90; it reads NNYGSRPVV. The helical transmembrane segment at 91–111 threads the bilayer; that stretch reads IVGGLLCCIGMILASYSNSVI. At 112-116 the chain is on the extracellular side; it reads ELYLT. A helical membrane pass occupies residues 117–137; it reads VGFIGGLGLAFNLQPALTIIG. Residues 138–149 are Cytoplasmic-facing; it reads KYFYRRRPLANG. The chain crosses the membrane as a helical span at residues 150 to 170; the sequence is CAMAGSPVFLSTLAPFNQYLF. At 171–174 the chain is on the extracellular side; sequence NNYG. A helical transmembrane segment spans residues 175–195; it reads WKGSFLILGGIFLHSCVAGCL. Residues 196-245 are Cytoplasmic-facing; sequence MRPVGPSPNTKKSKSKVGSRHDSTLKKASKVSTAQKVNRFLDFSLFMHRG. The helical transmembrane segment at 246–266 threads the bilayer; it reads FLIYLSGNVILFLGIFAPIIF. At 267-281 the chain is on the extracellular side; it reads LAQYAKHIGVDDYNS. Residues 282–302 traverse the membrane as a helical segment; the sequence is AFLLSVMAFIDMFARPSVGLI. At 303-311 the chain is on the cytoplasmic side; that stretch reads ANTSLIRPR. The chain crosses the membrane as a helical span at residues 312–332; the sequence is IQYLFSSAIIFTGICHLLCPL. The Extracellular portion of the chain corresponds to 333–337; it reads ATTYS. The chain crosses the membrane as a helical span at residues 338–358; it reads ALVVYVVFFGLGFGSISSLLF. The Cytoplasmic portion of the chain corresponds to 359–372; that stretch reads ECLMDIVGATRFSS. A helical transmembrane segment spans residues 373–393; sequence AVGLTTIVECCPVLFGPPLAG. Residues 394 to 405 are Extracellular-facing; the sequence is KLLDITGEYKYL. The chain crosses the membrane as a helical span at residues 406–426; that stretch reads YIASGTVVLVSGTYLLIGNAI. At 427 to 484 the chain is on the cytoplasmic side; the sequence is NYRLLDKERKREKAKKKKSASHASREMEALNRSKQDEVTVKASNAHNPPSDRDKESNI. Residues 438-484 form a disordered region; that stretch reads EKAKKKKSASHASREMEALNRSKQDEVTVKASNAHNPPSDRDKESNI. Basic and acidic residues-rich tracts occupy residues 449-465 and 475-484; these read ASRE…DEVT and PSDRDKESNI.

This sequence belongs to the major facilitator superfamily. Monocarboxylate porter (TC 2.A.1.13) family. Homodimer. Interacts with GRID2IP. Interacts with EMB; interaction mediates SLC16A7 targeting to the plasma membrane. Interacts with isoform 2 of BSG. Detected in testis and in spermatozoa (at protein level).

It is found in the cell membrane. The protein localises to the cytoplasm. The protein resides in the basolateral cell membrane. It carries out the reaction (S)-lactate(in) + H(+)(in) = (S)-lactate(out) + H(+)(out). It catalyses the reaction 3-methyl-2-oxobutanoate(out) + H(+)(out) = 3-methyl-2-oxobutanoate(in) + H(+)(in). The catalysed reaction is acetoacetate(out) + H(+)(out) = acetoacetate(in) + H(+)(in). The enzyme catalyses (R)-3-hydroxybutanoate(out) + H(+)(out) = (R)-3-hydroxybutanoate(in) + H(+)(in). It carries out the reaction 4-methyl-2-oxopentanoate(out) + H(+)(out) = 4-methyl-2-oxopentanoate(in) + H(+)(in). It catalyses the reaction pyruvate(out) + H(+)(out) = pyruvate(in) + H(+)(in). The catalysed reaction is (S)-3-hydroxybutanoate(out) + H(+)(out) = (S)-3-hydroxybutanoate(in) + H(+)(in). Transport activity exhibits steep dependence on substrate concentration. Substrate concentration sensitivity of SLC16A7 arises from the strong inter-subunit cooperativity of the SLC16A7 dimer during transport. Inhibited by AR-C155858. Its function is as follows. Proton-coupled monocarboxylate symporter. Catalyzes the rapid transport across the plasma membrane of monocarboxylates such as L-lactate, pyruvate and ketone bodies, acetoacetate, beta-hydroxybutyrate and acetate. Dimerization is functionally required and both subunits work cooperatively in transporting substrate. In Mus musculus (Mouse), this protein is Monocarboxylate transporter 2 (Slc16a7).